The following is a 185-amino-acid chain: Neuronal vesicle trafficking-associated protein 1 (185 aa).

Topologically, residues 1 to 82 are cytoplasmic; that stretch reads MVKLGNNFAE…ITEGVTERFK (82 aa). A helical; Signal-anchor for type II membrane protein membrane pass occupies residues 83–103; it reads VSVLVLFALAFLTCVVFLVVY. Topologically, residues 104 to 185 are lumenal; that stretch reads KVYKYDRACP…QETEAAEKSA (82 aa). The segment at 129–164 is required for GRIP1 interaction; the sequence is ESYYAEQDSSAREKFYTVINHYNLAKQSITRSVSPW.

The protein belongs to the NSG family. Forms a complex with GRIP1, GRIA2 and STX12 through direct interaction with GRIP1; controls the intracellular fate of AMPAR and the endosomal sorting of the GRIA2 subunit toward recycling and membrane targeting. Interacts with STX12. Interacts with APP; could regulate APP processing. Interacts with FAM171A1.

Its subcellular location is the membrane. The protein resides in the golgi apparatus. It is found in the trans-Golgi network membrane. It localises to the endosome membrane. The protein localises to the cell projection. Its subcellular location is the dendrite. The protein resides in the early endosome membrane. It is found in the late endosome membrane. It localises to the lysosome lumen. The protein localises to the recycling endosome membrane. Its subcellular location is the cytoplasmic vesicle membrane. The protein resides in the golgi stack membrane. It is found in the endosome. It localises to the multivesicular body membrane. The protein localises to the endoplasmic reticulum membrane. Its function is as follows. Plays a role in the recycling mechanism in neurons of multiple receptors, including AMPAR, APP and L1CAM and acts at the level of early endosomes to promote sorting of receptors toward a recycling pathway. Regulates sorting and recycling of GRIA2 through interaction with GRIP1 and then contributes to the regulation of synaptic transmission and plasticity by affecting the recycling and targeting of AMPA receptors to the synapse. Is required for faithful sorting of L1CAM to axons by facilitating trafficking from somatodendritic early endosome or the recycling endosome. In an other hand, induces apoptosis via the activation of CASP3 in response to DNA damage. This chain is Neuronal vesicle trafficking-associated protein 1, found in Macaca fascicularis (Crab-eating macaque).